A 337-amino-acid polypeptide reads, in one-letter code: Inositol 2-dehydrogenase (337 aa).

The protein belongs to the Gfo/Idh/MocA family. In terms of assembly, homotetramer.

The catalysed reaction is myo-inositol + NAD(+) = scyllo-inosose + NADH + H(+). Its function is as follows. Involved in the oxidation of myo-inositol (MI) to 2-keto-myo-inositol (2KMI or 2-inosose). The protein is Inositol 2-dehydrogenase of Burkholderia multivorans (strain ATCC 17616 / 249).